The sequence spans 382 residues: Serine/threonine-protein phosphatase 2A activator 2 (382 aa).

Residues 363-382 are disordered; sequence SHKGVPTLGNRPGIKPIPFD.

This sequence belongs to the PTPA-type PPIase family.

It is found in the cytoplasm. It carries out the reaction [protein]-peptidylproline (omega=180) = [protein]-peptidylproline (omega=0). PPIases accelerate the folding of proteins. It catalyzes the cis-trans isomerization of proline imidic peptide bonds in oligopeptides. Acts as a regulatory subunit for PP2A-like phosphatases modulating their activity or substrate specificity, probably by inducing a conformational change in the catalytic subunit, a direct target of the PPIase. Can reactivate inactive phosphatase PP2A-phosphatase methylesterase complexes (PP2Ai) in presence of ATP and Mg(2+) by dissociating the inactive form from the complex. The polypeptide is Serine/threonine-protein phosphatase 2A activator 2 (RRD2) (Cryptococcus neoformans var. neoformans serotype D (strain B-3501A) (Filobasidiella neoformans)).